Consider the following 722-residue polypeptide: Glycine--tRNA ligase beta subunit (722 aa).

Belongs to the class-II aminoacyl-tRNA synthetase family. In terms of assembly, tetramer of two alpha and two beta subunits.

The protein localises to the cytoplasm. It carries out the reaction tRNA(Gly) + glycine + ATP = glycyl-tRNA(Gly) + AMP + diphosphate. The polypeptide is Glycine--tRNA ligase beta subunit (Haemophilus influenzae (strain 86-028NP)).